The sequence spans 417 residues: Cotranscriptional regulator ARB2A (417 aa).

A signal peptide spans 1–18 (MSISLSSLIFLPIWINMA). Asn-26 carries an N-linked (GlcNAc...) asparagine glycan. The tract at residues 208–248 (KQKMHKQSSSSDGTDEPAGKRERRDKVSKETKKRRDFYEKY) is disordered. The span at 224-237 (PAGKRERRDKVSKE) shows a compositional bias: basic and acidic residues. The active-site Nucleophile is Ser-294. Residues 398–417 (SSSQKPALTRRSHRIKHEEL) form a disordered region. Residues 405 to 417 (LTRRSHRIKHEEL) show a composition bias toward basic residues. Residues 414–417 (HEEL) carry the Prevents secretion from ER motif.

The protein belongs to the ARB2A family. Interacts with AGO2. Found in a complex, composed of AGO2, CHD7 and ARB2A.

The protein resides in the nucleus. Its subcellular location is the cytoplasm. It localises to the endoplasmic reticulum. In terms of biological role, plays a role in the regulation of alternative splicing, by interacting with AGO2 and CHD7. Seems to be required for stabilizing protein-protein interactions at the chromatin-spliceosome interface. May have hydrolase activity. This is Cotranscriptional regulator ARB2A (Arb2a) from Mus musculus (Mouse).